Reading from the N-terminus, the 510-residue chain is Histidine ammonia-lyase (510 aa).

Positions 145–147 form a cross-link, 5-imidazolinone (Ala-Gly); sequence ASG. Residue Ser-146 is modified to 2,3-didehydroalanine (Ser).

This sequence belongs to the PAL/histidase family. In terms of processing, contains an active site 4-methylidene-imidazol-5-one (MIO), which is formed autocatalytically by cyclization and dehydration of residues Ala-Ser-Gly.

It localises to the cytoplasm. It catalyses the reaction L-histidine = trans-urocanate + NH4(+). It participates in amino-acid degradation; L-histidine degradation into L-glutamate; N-formimidoyl-L-glutamate from L-histidine: step 1/3. In Stigmatella aurantiaca, this protein is Histidine ammonia-lyase.